Reading from the N-terminus, the 467-residue chain is Flagellum-specific ATP synthase (467 aa).

180 to 187 is an ATP binding site; it reads AGSGVGKS.

Belongs to the ATPase alpha/beta chains family.

The protein localises to the cytoplasm. It catalyses the reaction ATP + H2O + 4 H(+)(in) = ADP + phosphate + 5 H(+)(out). Probable catalytic subunit of a protein translocase for flagellum-specific export, or a proton translocase involved in local circuits at the flagellum. The sequence is that of Flagellum-specific ATP synthase (fliI) from Rhizobium meliloti (strain 1021) (Ensifer meliloti).